The chain runs to 78 residues: Beta-defensin 29 (78 aa).

A signal peptide spans 1–23 (MPVTKPYFVTVAVLLILVDKTTG). 3 disulfide bridges follow: Cys-40–Cys-67, Cys-47–Cys-61, and Cys-51–Cys-68.

The protein belongs to the beta-defensin family.

The protein resides in the secreted. Functionally, has antibacterial activity. This chain is Beta-defensin 29 (Defb29), found in Rattus norvegicus (Rat).